Reading from the N-terminus, the 144-residue chain is MFKEFKTFIMRGNVLDMAVGIIIGAAFGKIVTSFVTDVLTPVLSLGMGKVDFSNLFFVLNGDSYPTLDAAKAAGVATLNYGTFLNVVLDFVIVAFSIFLIIKAANKLKRAEEPAPVTTKECPECCSSIPMKARKCAHCGSAVAS.

A run of 2 helical transmembrane segments spans residues 14–34 and 81–101; these read VLDM…VTSF and GTFL…FLII.

This sequence belongs to the MscL family. In terms of assembly, homopentamer.

The protein localises to the cell inner membrane. Its function is as follows. Channel that opens in response to stretch forces in the membrane lipid bilayer. May participate in the regulation of osmotic pressure changes within the cell. In Bdellovibrio bacteriovorus (strain ATCC 15356 / DSM 50701 / NCIMB 9529 / HD100), this protein is Large-conductance mechanosensitive channel.